The chain runs to 530 residues: UDP-N-acetylmuramoyl-L-alanyl-D-glutamate--2,6-diaminopimelate ligase (530 aa).

Residue leucine 52 participates in UDP-N-acetyl-alpha-D-muramoyl-L-alanyl-D-glutamate binding. Glycine 139–threonine 145 is an ATP binding site. UDP-N-acetyl-alpha-D-muramoyl-L-alanyl-D-glutamate is bound by residues threonine 181–threonine 182, serine 208, and arginine 216. Lysine 248 carries the N6-carboxylysine modification. Meso-2,6-diaminopimelate contacts are provided by residues arginine 410, aspartate 434–arginine 437, glycine 488, and glutamate 492. The Meso-diaminopimelate recognition motif signature appears at aspartate 434–arginine 437.

The protein belongs to the MurCDEF family. MurE subfamily. It depends on Mg(2+) as a cofactor. Carboxylation is probably crucial for Mg(2+) binding and, consequently, for the gamma-phosphate positioning of ATP.

The protein localises to the cytoplasm. It catalyses the reaction UDP-N-acetyl-alpha-D-muramoyl-L-alanyl-D-glutamate + meso-2,6-diaminopimelate + ATP = UDP-N-acetyl-alpha-D-muramoyl-L-alanyl-gamma-D-glutamyl-meso-2,6-diaminopimelate + ADP + phosphate + H(+). The protein operates within cell wall biogenesis; peptidoglycan biosynthesis. Functionally, catalyzes the addition of meso-diaminopimelic acid to the nucleotide precursor UDP-N-acetylmuramoyl-L-alanyl-D-glutamate (UMAG) in the biosynthesis of bacterial cell-wall peptidoglycan. The chain is UDP-N-acetylmuramoyl-L-alanyl-D-glutamate--2,6-diaminopimelate ligase from Mycobacterium leprae (strain TN).